The chain runs to 291 residues: uncharacterized protein (291 aa).

The protein to E.cuniculi ECU03_0120.

This is an uncharacterized protein from Encephalitozoon cuniculi (strain GB-M1) (Microsporidian parasite).